The primary structure comprises 277 residues: Carbonyl reductase [NADPH] 1 (277 aa).

NADP(+) is bound by residues 10-34 (VTGS…GEVV), 63-64 (DI), and asparagine 90. The residue at position 30 (serine 30) is a Phosphoserine. Glutathione contacts are provided by residues 95 to 97 (FKV) and glutamine 106. A substrate-binding site is contributed by serine 140. 193 to 194 (AY) lines the glutathione pocket. Tyrosine 194 serves as the catalytic Proton acceptor. NADP(+)-binding positions include 194–198 (YGVTK) and 231–233 (VRT).

It belongs to the short-chain dehydrogenases/reductases (SDR) family. In terms of assembly, monomer.

The protein localises to the cytoplasm. The enzyme catalyses a secondary alcohol + NADP(+) = a ketone + NADPH + H(+). It carries out the reaction prostaglandin F2alpha + NADP(+) = prostaglandin E2 + NADPH + H(+). It catalyses the reaction prostaglandin E1 + NADP(+) = 15-oxoprostaglandin E1 + NADPH + H(+). The catalysed reaction is prostaglandin D2 + NADP(+) = 15-oxoprostaglandin D2 + NADPH + H(+). The enzyme catalyses menadione + NADPH + H(+) = menadiol + NADP(+). It carries out the reaction prostaglandin E2 + NADP(+) = 15-oxoprostaglandin E2 + NADPH + H(+). It catalyses the reaction prostaglandin F2alpha + NADP(+) = 15-oxoprostaglandin F2alpha + NADPH + H(+). The catalysed reaction is daunorubicin + NADPH + H(+) = 13-dihydrodaunorubicin + NADP(+). The enzyme catalyses S-nitrosoglutathione + NADPH + H(+) = S-(hydroxysulfenamide)glutathione + NADP(+). It carries out the reaction a primary alcohol + NADP(+) = an aldehyde + NADPH + H(+). It catalyses the reaction cortisol + NADPH + H(+) = 20beta-dihydrocortisol + NADP(+). The catalysed reaction is corticosterone + NADPH + H(+) = 20beta-dihydrocorticosterone + NADP(+). Its function is as follows. NADPH-dependent reductase with broad substrate specificity. Catalyzes the reduction of a wide variety of carbonyl compounds including quinones, prostaglandins, menadione, plus various xenobiotics. Catalyzes the reduction of the antitumor anthracyclines doxorubicin and daunorubicin to the cardiotoxic compounds doxorubicinol and daunorubicinol. Can convert prostaglandin E to prostaglandin F2-alpha. Can bind glutathione, which explains its higher affinity for glutathione-conjugated substrates. Catalyzes the reduction of S-nitrosoglutathione. In addition, participates in the glucocorticoid metabolism by catalyzing the NADPH-dependent cortisol/corticosterone into 20beta-dihydrocortisol (20b-DHF) or 20beta-corticosterone (20b-DHB), which are weak agonists of NR3C1 and NR3C2 in adipose tissue. The chain is Carbonyl reductase [NADPH] 1 from Macaca fascicularis (Crab-eating macaque).